The primary structure comprises 222 residues: Phosphoribosylformylglycinamidine synthase subunit PurQ (222 aa).

The 220-residue stretch at 3-222 (AAVLVFPGSN…ASLAAALVAA (220 aa)) folds into the Glutamine amidotransferase type-1 domain. Catalysis depends on Cys-86, which acts as the Nucleophile. Active-site residues include His-194 and Glu-196.

In terms of assembly, part of the FGAM synthase complex composed of 1 PurL, 1 PurQ and 2 PurS subunits.

Its subcellular location is the cytoplasm. It catalyses the reaction N(2)-formyl-N(1)-(5-phospho-beta-D-ribosyl)glycinamide + L-glutamine + ATP + H2O = 2-formamido-N(1)-(5-O-phospho-beta-D-ribosyl)acetamidine + L-glutamate + ADP + phosphate + H(+). The enzyme catalyses L-glutamine + H2O = L-glutamate + NH4(+). It functions in the pathway purine metabolism; IMP biosynthesis via de novo pathway; 5-amino-1-(5-phospho-D-ribosyl)imidazole from N(2)-formyl-N(1)-(5-phospho-D-ribosyl)glycinamide: step 1/2. In terms of biological role, part of the phosphoribosylformylglycinamidine synthase complex involved in the purines biosynthetic pathway. Catalyzes the ATP-dependent conversion of formylglycinamide ribonucleotide (FGAR) and glutamine to yield formylglycinamidine ribonucleotide (FGAM) and glutamate. The FGAM synthase complex is composed of three subunits. PurQ produces an ammonia molecule by converting glutamine to glutamate. PurL transfers the ammonia molecule to FGAR to form FGAM in an ATP-dependent manner. PurS interacts with PurQ and PurL and is thought to assist in the transfer of the ammonia molecule from PurQ to PurL. The chain is Phosphoribosylformylglycinamidine synthase subunit PurQ from Jannaschia sp. (strain CCS1).